The following is a 160-amino-acid chain: Dihydrofolate reductase (160 aa).

Residues 1–160 (MVKAIWAMDQ…KVAYYHKIAR (160 aa)) form the DHFR domain. Substrate is bound at residue 5–7 (IWA). NADP(+) is bound by residues 6–7 (WA) and 14–19 (IGNGNS). Residues E27 and R32 each contribute to the substrate site. 43–46 (GSAT) contacts NADP(+). A substrate-binding site is contributed by R57. NADP(+) contacts are provided by residues 62-65 (LTRN) and 101-106 (CGGAQV). Residue S120 coordinates substrate.

The protein belongs to the dihydrofolate reductase family.

It carries out the reaction (6S)-5,6,7,8-tetrahydrofolate + NADP(+) = 7,8-dihydrofolate + NADPH + H(+). It participates in cofactor biosynthesis; tetrahydrofolate biosynthesis; 5,6,7,8-tetrahydrofolate from 7,8-dihydrofolate: step 1/1. Key enzyme in folate metabolism. Catalyzes an essential reaction for de novo glycine and purine synthesis, and for DNA precursor synthesis. In Mycoplasma pneumoniae (strain ATCC 29342 / M129 / Subtype 1) (Mycoplasmoides pneumoniae), this protein is Dihydrofolate reductase (folA).